A 1080-amino-acid polypeptide reads, in one-letter code: MPAVASVPKELYLSSSLKDLNKKTEVKPEKTSTKNYIHSAQKIFKTAEECRLDRDEERAYVLYMKYVAVYNLIKKRPDFKQQQDYYLSILGPANIKKAIEEAERLSESLKLRYEEAEVRKQLEEKDRREEEQLQQQKRQEMGREDSGAAAKRSVENLLDSKTKTQRINGEKSEGAAAAERGAITAKELYTMMMDKNTSLIIMDARKIQDYQHSCILDSLSVPEEAISPGVTASWIEANLSDDSKDTWKKRGSVDYVVLLDWFSSAKDLLLGTTLRSLKDALFKWESKTVLRHEPLVLEGGYENWLLCYPQFTTNAKVTPPPRSRAEEVSVSLDFTYPSLEEPVPSKLPTQMPPPPIETNEKALLVTDQDEKLRLSTQPALAGPGAAPRAEASPIIQPAPATKSVPQVDRTKKPSVKLPEDHRIKSENTDQSGRVLSDRSTKPVFPSPTTMLTDEEKARIHQETALLMEKNKQEKELWDKQQKEQKEKLRREEQERKAGKTQDADERDSTENQHKAKDGQEKKDSKQTKTEDRELSADGAQEATGTQRQSKSEHEASDAKVPVEGKRCPTSEAQKRPADVSPASVSGELNAGKAQREPLTRARSEEMGRIVPGLPLGWAKFLDPITGTFRYYHSPTNTVHMYPPEMAPSSAPPSTPPTHKVKPQVPAERDREPSKLKRSYSSPDITQALQEEEKRRPAVTPMVNRENKPPCYPKAEISRLSASQIRNLNPVFGGSGPALTGLRNLGNTCYMNSILQCLCNAPHLADYFNRNCYQDDINRSNLLGHKGEVAEEFGIIMKALWTGQYRYISPKDFKVTIGKINDQFAGSSQQDSQELLLFLMDGLHEDLNKADNRKRHKEENNEHLDDLQAAEHAWQKHKQLNESIIVALFQGQFKSTVQCLTCRRRSRTFEAFMYLSLPLASTSKCTLQDCLRLFSKEEKLTDNNRFYCSHCRARRDSLKKIEIWKLPPVLLVHLKRFSYDGRWKQKLQTSVDFPLENLDLSQYVIGPKNSLKKYNLFSVSNHYGGLDGGHYTAYCKNAARQRWFKFDDHEVSDISVSSVRSSAAYILFYTSLGPRITDVAT.

The 84-residue stretch at 33–116 folds into the MIT domain; that stretch reads TKNYIHSAQK…ESLKLRYEEA (84 aa). Residues 119-173 are compositionally biased toward basic and acidic residues; that stretch reads RKQLEEKDRREEEQLQQQKRQEMGREDSGAAAKRSVENLLDSKTKTQRINGEKSE. A disordered region spans residues 119-176; the sequence is RKQLEEKDRREEEQLQQQKRQEMGREDSGAAAKRSVENLLDSKTKTQRINGEKSEGAA. Ser160 bears the Phosphoserine mark. Residues 195–313 form the Rhodanese domain; the sequence is KNTSLIIMDA…WLLCYPQFTT (119 aa). Residues 379-393 show a composition bias toward low complexity; sequence ALAGPGAAPRAEASP. Disordered stretches follow at residues 379-455, 468-605, and 642-710; these read ALAG…TDEE, EKNK…RSEE, and PPEM…KPPC. Ser392 carries the post-translational modification Phosphoserine. The short motif at 405–413 is the SH3-binding element; it reads PQVDRTKKP. Basic and acidic residues predominate over residues 417–427; sequence LPEDHRIKSEN. Position 446 is a phosphoserine (Ser446). Composition is skewed to basic and acidic residues over residues 468–535, 549–577, and 593–605; these read EKNK…RELS, SKSE…KRPA, and AQRE…RSEE. Position 569 is a phosphothreonine (Thr569). Polar residues predominate over residues 678 to 688; it reads SYSSPDITQAL. Ser680 and Ser681 each carry phosphoserine. A USP domain is found at 739–1071; sequence TGLRNLGNTC…AAYILFYTSL (333 aa). Catalysis depends on Cys748, which acts as the Nucleophile. Phosphothreonine is present on Thr907. The active-site Proton acceptor is the His1029.

Belongs to the peptidase C19 family. In terms of assembly, forms a ternary complex with RNF128 and OTUB1. Interacts (via C-terminal UCH catalytic domain) with OTUB1 isoform 1. Interacts with STAM2 (via SH3 domain). Interacts with DNAJB3, EGFR, EPS15, RASGRF1, RNF41, YWHAE, YWHAG and YWHAZ. Interacts with NBR1, RASGRF1, RNF41 and IST1. Associates with the ESCRT-0 complex and with microtubules. Interacts with BIRC6/bruce and KIF23/MKLP1. Post-translationally, phosphorylation of Ser-680 is essential for interaction with YWHAE and for cytosol localization. Undergoes dephosphorylation at Ser-680 in the M phase. Tyrosine-phosphorylated in its N-terminal half in an EGFR-dependent manner. Ubiquitinated. Inactive form is mostly monoubiquitinated, but polyubiquitination happens too. Ubiquitination is increased in EGF-stimulated cells. Ubiquitination of active form is undetectable, suggesting a possibility that USP8 deubiquitinates itself, thereby regulating its own function. As to expression, highly expressed in testis. Expressed at intermediate level in brain.

Its subcellular location is the cytoplasm. It localises to the nucleus. It is found in the endosome membrane. The protein resides in the cell membrane. The catalysed reaction is Thiol-dependent hydrolysis of ester, thioester, amide, peptide and isopeptide bonds formed by the C-terminal Gly of ubiquitin (a 76-residue protein attached to proteins as an intracellular targeting signal).. Functionally, hydrolase that can remove conjugated ubiquitin from proteins and therefore plays an important regulatory role at the level of protein turnover by preventing degradation. Converts both 'Lys-48' an 'Lys-63'-linked ubiquitin chains. Catalytic activity is enhanced in the M phase. Involved in cell proliferation. Required to enter into S phase in response to serum stimulation. May regulate T-cell anergy mediated by RNF128 via the formation of a complex containing RNF128 and OTUB1. Probably regulates the stability of STAM2 and RASGRF1. Regulates endosomal ubiquitin dynamics, cargo sorting, membrane traffic at early endosomes, and maintenance of ESCRT-0 stability. The level of protein ubiquitination on endosomes is essential for maintaining the morphology of the organelle. Deubiquitinates EPS15 and controls tyrosine kinase stability. Removes conjugated ubiquitin from EGFR thus regulating EGFR degradation and downstream MAPK signaling. Involved in acrosome biogenesis through interaction with the spermatid ESCRT-0 complex and microtubules. Deubiquitinates BIRC6/bruce and KIF23/MKLP1. Deubiquitinates BACE1 which inhibits BACE1 lysosomal degradation and modulates BACE-mediated APP cleavage and amyloid-beta formation. This is Ubiquitin carboxyl-terminal hydrolase 8 from Mus musculus (Mouse).